The following is a 425-amino-acid chain: Histidine--tRNA ligase (425 aa).

It belongs to the class-II aminoacyl-tRNA synthetase family. Homodimer.

It localises to the cytoplasm. The enzyme catalyses tRNA(His) + L-histidine + ATP = L-histidyl-tRNA(His) + AMP + diphosphate + H(+). This chain is Histidine--tRNA ligase, found in Streptomyces coelicolor (strain ATCC BAA-471 / A3(2) / M145).